We begin with the raw amino-acid sequence, 246 residues long: Transmembrane and ubiquitin-like domain-containing protein 1 (246 aa).

The interval 2 to 30 (ALIEGVGDEVTILFSALACLLVLALAWVS) is required to release iHOPS from membranes. A helical membrane pass occupies residues 11-31 (VTILFSALACLLVLALAWVST). The tract at residues 35 to 102 (EGADPLPQPS…PPPPDSPQEP (68 aa)) is disordered. The span at 40 to 50 (LPQPSGTPTPT) shows a compositional bias: pro residues. 2 positions are modified to phosphothreonine: Thr-71 and Thr-92. Phosphoserine occurs at positions 98 and 127. The Ubiquitin-like domain occupies 103-176 (LVLRLKFLND…LHCHVSTRVG (74 aa)). The next 2 helical transmembrane spans lie at 195 to 215 (VGSLLLPLLLLLLLLLWYCQI) and 221 to 241 (FPLTATLGLAGFTLLLSLLAF).

As to quaternary structure, interacts with EEF1A1, GRIA2, GRIP1, CAMLG, TUBG1. Interacts with NPM1 and CDKN2A; TMUB1 can enhance interaction between NPM1 and CDKN2A and is proposed to bridge the proteins; proposed to be mediated by iHOPS. Interacts with ERLIN2 and AMFR; TMUB1 promotes the interaction of ERLIN2 with AMFR. In terms of processing, processed by regulated intramembrane proteolysis (RIP) in the N-terminus to release iHOPS from membranes.

It localises to the membrane. Its subcellular location is the postsynaptic cell membrane. The protein resides in the recycling endosome. The protein localises to the cytoplasm. It is found in the nucleus. It localises to the nucleolus. Its subcellular location is the cytoskeleton. The protein resides in the microtubule organizing center. The protein localises to the centrosome. Functionally, involved in sterol-regulated ubiquitination and degradation of HMG-CoA reductase HMGCR. Involved in positive regulation of AMPA-selective glutamate receptor GRIA2 recycling to the cell surface. Acts as negative regulator of hepatocyte growth during regeneration. Its function is as follows. May contribute to the regulation of translation during cell-cycle progression. May contribute to the regulation of cell proliferation. May be involved in centrosome assembly. Modulates stabilization and nucleolar localization of tumor suppressor CDKN2A and enhances association between CDKN2A and NPM1. The sequence is that of Transmembrane and ubiquitin-like domain-containing protein 1 (TMUB1) from Bos taurus (Bovine).